The sequence spans 337 residues: ATP-dependent 6-phosphofructokinase (337 aa).

Glycine 11 provides a ligand contact to ATP. 21–25 (RAVVR) is a binding site for ADP. Residues 72–73 (RY) and 102–105 (GDGS) contribute to the ATP site. Position 103 (aspartate 103) interacts with Mg(2+). 125–127 (TID) is a substrate binding site. Aspartate 127 acts as the Proton acceptor in catalysis. Arginine 154 is a binding site for ADP. Substrate-binding positions include arginine 162 and 169–171 (MGR). Residues 185–187 (GAD), lysine 212, and 214–216 (KNH) contribute to the ADP site. Residues glutamate 223, arginine 245, and 251 to 254 (HILR) each bind substrate.

It belongs to the phosphofructokinase type A (PFKA) family. ATP-dependent PFK group I subfamily. Prokaryotic clade 'B1' sub-subfamily. In terms of assembly, homotetramer. Mg(2+) is required as a cofactor.

It localises to the cytoplasm. The catalysed reaction is beta-D-fructose 6-phosphate + ATP = beta-D-fructose 1,6-bisphosphate + ADP + H(+). Its pathway is carbohydrate degradation; glycolysis; D-glyceraldehyde 3-phosphate and glycerone phosphate from D-glucose: step 3/4. With respect to regulation, allosterically activated by ADP and other diphosphonucleosides, and allosterically inhibited by phosphoenolpyruvate. In terms of biological role, catalyzes the phosphorylation of D-fructose 6-phosphate to fructose 1,6-bisphosphate by ATP, the first committing step of glycolysis. The sequence is that of ATP-dependent 6-phosphofructokinase from Streptococcus pyogenes serotype M3 (strain SSI-1).